A 319-amino-acid polypeptide reads, in one-letter code: MLSLQTLAKKALAKQSVPEEYHYILKYCGLWWQNKPIHLCDYCNYVIVNSTPFKGELHLDVALIMAIKENNHDLIRLFTEWGANIYYGLSCARTEYTQELCRKLGAKDGLDKKDIFISLLHHKTSNNIILCHEIFNKNPMLEILNMQDFGEEIHRELKHLIFYILDNVPINTLNKYWYAIAVKYKLKRAISFFYQTYDHLNMWRLMCAISFNNVFDLHEIYEQKIVHMDIDKMMHLACMEDDNFLTIYYCFVLGADIDQAINVTLWHHQTNNLCFCKDLKDLKEQNGLTARPLLLPNITDPKKIYTMLKNYLPISSNSR.

It belongs to the asfivirus MGF 360 family.

Its function is as follows. Plays a role in virus cell tropism, and may be required for efficient virus replication in macrophages. This chain is Protein MGF 360-8L, found in Ornithodoros (relapsing fever ticks).